The sequence spans 261 residues: Calbindin (261 aa).

Alanine 2 is modified (N-acetylalanine). The interval 2 to 7 (AESHLQ) is interaction with RANBP9. 5 consecutive EF-hand domains span residues 11 to 46 (ITASQFFEIWLHFDADGSGYLEGKELQNLIQELLQA), 53 to 88 (ELSPEMKSFVDQYGQRDDGKIGIVELAHVLPTEENF), 98 to 133 (KSCEEFMKTWRKYDTDHSGFIETEELKNFLKDLLEK), 142 to 177 (KLAEYTDLMLKLFDSNNDGKLELTEMARLLPVQENF), and 186 to 221 (MCGKEFNKAFELYDQDGNGYIDENELDALLKDLCEK). Ca(2+)-binding residues include aspartate 24, aspartate 26, serine 28, tyrosine 30, and glutamate 35. Ca(2+) contacts are provided by aspartate 111, aspartate 113, serine 115, glutamate 122, aspartate 155, asparagine 157, aspartate 159, lysine 161, glutamate 166, aspartate 199, aspartate 201, asparagine 203, tyrosine 205, and glutamate 210.

It belongs to the calbindin family. As to quaternary structure, interacts with RANBP9. As to expression, expressed in the modiolar nerve root and in bushy neurons in the ventral cochlear nucleus (at protein level).

Functionally, buffers cytosolic calcium. May stimulate a membrane Ca(2+)-ATPase and a 3',5'-cyclic nucleotide phosphodiesterase. The chain is Calbindin (Calb1) from Mus musculus (Mouse).